A 59-amino-acid polypeptide reads, in one-letter code: Large ribosomal subunit protein bL32B (59 aa).

This sequence belongs to the bacterial ribosomal protein bL32 family.

This chain is Large ribosomal subunit protein bL32B (rpmF2), found in Enterococcus faecalis (strain ATCC 700802 / V583).